A 446-amino-acid chain; its full sequence is Argininosuccinate lyase (446 aa).

It belongs to the lyase 1 family. Argininosuccinate lyase subfamily.

It is found in the cytoplasm. It catalyses the reaction 2-(N(omega)-L-arginino)succinate = fumarate + L-arginine. It functions in the pathway amino-acid biosynthesis; L-arginine biosynthesis; L-arginine from L-ornithine and carbamoyl phosphate: step 3/3. This is Argininosuccinate lyase from Sulfurisphaera tokodaii (strain DSM 16993 / JCM 10545 / NBRC 100140 / 7) (Sulfolobus tokodaii).